A 344-amino-acid chain; its full sequence is MSNTQLSYKDAGVDIHTGNELVERIKGDVKRTRRSEVMGGLGGFGALCALPTKYKEPILVSGTDGVGTKLRLAIDLKKHDTIGQDLVAMCVNDLIVQGAEPLFFLDYYATGKLDVDVAASVIKGIADGCEMSGCALVGGETTEMPGMYHEGDYDLAGFCVGVVEKSEIIDGTAVKTGDTLIALGSSGAHSNGYSLIRKVLEVSGANPADLLEGKPLSEHFLAPTKIYVKSILQLIKQTEVHAIAHLTGGGFWENIPRVLPANTKAVIDESSWQWPAIFNWLQEKGNISRYEMYRTFNCGVGMVISLPEKEVETALALLEQAGEKAWVIGKIEHLGEGEAQVEIQ.

This sequence belongs to the AIR synthase family.

It is found in the cytoplasm. It carries out the reaction 2-formamido-N(1)-(5-O-phospho-beta-D-ribosyl)acetamidine + ATP = 5-amino-1-(5-phospho-beta-D-ribosyl)imidazole + ADP + phosphate + H(+). It functions in the pathway purine metabolism; IMP biosynthesis via de novo pathway; 5-amino-1-(5-phospho-D-ribosyl)imidazole from N(2)-formyl-N(1)-(5-phospho-D-ribosyl)glycinamide: step 2/2. In Haemophilus influenzae (strain 86-028NP), this protein is Phosphoribosylformylglycinamidine cyclo-ligase.